Here is an 87-residue protein sequence, read N- to C-terminus: MKAQIFVVVLGLAALSVLCYGSEADESALHEEIFQLLAASDEVPKPQERDCVRFWGKCSQTSDCCPHLACKSKWPRNICVWDGSVGK.

Positions 1-24 are cleaved as a signal peptide; the sequence is MKAQIFVVVLGLAALSVLCYGSEA. A propeptide spanning residues 25-49 is cleaved from the precursor; that stretch reads DESALHEEIFQLLAASDEVPKPQER. Disulfide bonds link Cys51–Cys65, Cys58–Cys70, and Cys64–Cys79. Residue Val85 is modified to Valine amide.

In terms of tissue distribution, expressed by the venom gland.

It is found in the secreted. Functionally, inhibits P/Q- (Cav2.1/CACNA1A) and N-type (Cav2.2/CACNA1B) voltage-gated calcium channel by modifying voltage-dependent gating. It selectively and reversibly blocks the calcium channels coupled to glutamate release. Also inhibits potassium channels (Kv2.1/KCNB1) with lower affinity. Has also been shown to weakly inhibit Kv11.1/KCNH2/ERG1, Kv1.2/KCNA2, Kv1.3/KCNA3, Nav1.5/SCN5A, Nav1.7/SCN9A and TRPV1. The chain is Omega-theraphotoxin-Gr1a from Grammostola rosea (Chilean rose tarantula).